Reading from the N-terminus, the 338-residue chain is Ketol-acid reductoisomerase (NADP(+)) (338 aa).

Residues M1–T181 form the KARI N-terminal Rossmann domain. Residues Y24 to Q27, R47, S50, S52, and D82 to Q85 each bind NADP(+). H107 is an active-site residue. An NADP(+)-binding site is contributed by G133. Residues T182–I327 enclose the KARI C-terminal knotted domain. 4 residues coordinate Mg(2+): D190, E194, E226, and E230. S251 is a substrate binding site.

Belongs to the ketol-acid reductoisomerase family. Mg(2+) serves as cofactor.

It carries out the reaction (2R)-2,3-dihydroxy-3-methylbutanoate + NADP(+) = (2S)-2-acetolactate + NADPH + H(+). The catalysed reaction is (2R,3R)-2,3-dihydroxy-3-methylpentanoate + NADP(+) = (S)-2-ethyl-2-hydroxy-3-oxobutanoate + NADPH + H(+). Its pathway is amino-acid biosynthesis; L-isoleucine biosynthesis; L-isoleucine from 2-oxobutanoate: step 2/4. It participates in amino-acid biosynthesis; L-valine biosynthesis; L-valine from pyruvate: step 2/4. Involved in the biosynthesis of branched-chain amino acids (BCAA). Catalyzes an alkyl-migration followed by a ketol-acid reduction of (S)-2-acetolactate (S2AL) to yield (R)-2,3-dihydroxy-isovalerate. In the isomerase reaction, S2AL is rearranged via a Mg-dependent methyl migration to produce 3-hydroxy-3-methyl-2-ketobutyrate (HMKB). In the reductase reaction, this 2-ketoacid undergoes a metal-dependent reduction by NADPH to yield (R)-2,3-dihydroxy-isovalerate. The chain is Ketol-acid reductoisomerase (NADP(+)) from Azotobacter vinelandii (strain DJ / ATCC BAA-1303).